The chain runs to 3083 residues: Genome polyprotein (3083 aa).

A Peptidase S30 domain is found at 173 to 313; that stretch reads VVRSASVNNL…VFFYDDVDHY (141 aa). Residues histidine 226, glutamate 235, and serine 267 each act as for P1 proteinase activity in the active site. Residues 365–368 carry the Involved in interaction with stylet and aphid transmission motif; sequence KLSC. Positions 621-623 match the Involved in virions binding and aphid transmission motif; the sequence is PTK. Residues 647–769 enclose the Peptidase C6 domain; the sequence is MYIAKEGYCY…QSEMKHYRVG (123 aa). Residues cysteine 655 and histidine 728 each act as for helper component proteinase activity in the active site. A Helicase ATP-binding domain is found at 1239 to 1391; sequence EIASSNEGEF…TQFAVKVKTE (153 aa). 1252 to 1259 serves as a coordination point for ATP; that stretch reads GAVGSGKS. The DECH box motif lies at 1341–1344; the sequence is DECH. The Helicase C-terminal domain maps to 1410–1569; that stretch reads DMIQHGNNIL…GLSVTTHGVS (160 aa). The short motif at 1894–1903 is the Nuclear localization signal element; that stretch reads KRGKVKGNNS. An O-(5'-phospho-RNA)-tyrosine modification is found at tyrosine 1918. The region spanning 2045 to 2263 is the Peptidase C4 domain; the sequence is SKSIYKGVRD…IAWGLLNLVD (219 aa). Residues histidine 2090, aspartate 2125, and cysteine 2195 each act as for nuclear inclusion protein A activity in the active site. A RdRp catalytic domain is found at 2529-2653; that stretch reads WLYCHADGSQ…AVKDEDSGLL (125 aa). The tract at residues 2805-2854 is disordered; sequence SDTQTKEADAGAAKRDKDEEKEKKKDVASSSANEKTMTATAKDKDVNAGS. Basic and acidic residues predominate over residues 2808-2831; sequence QTKEADAGAAKRDKDEEKEKKKDV. Polar residues predominate over residues 2832 to 2843; that stretch reads ASSSANEKTMTA.

It belongs to the potyviridae genome polyprotein family. Interacts with host eIF4E protein (via cap-binding region); this interaction mediates the translation of the VPg-viral RNA conjugates. Part of a complex that comprises VPg, RNA, host EIF4E and EIF4G; this interaction mediates the translation of the VPg-viral RNA conjugates. Post-translationally, VPg is uridylylated by the polymerase and is covalently attached to the 5'-end of the genomic RNA. This uridylylated form acts as a nucleotide-peptide primer for the polymerase. In terms of processing, potyviral RNA is expressed as two polyproteins which undergo post-translational proteolytic processing. Genome polyprotein is processed by NIa-pro, P1 and HC-pro proteinases resulting in the production of at least ten individual proteins. P3N-PIPO polyprotein is cleaved by P1 and HC-pro proteinases resulting in the production of three individual proteins. The P1 proteinase and the HC-pro cleave only their respective C-termini autocatalytically. 6K1 is essential for proper proteolytic separation of P3 from CI.

The protein localises to the host cytoplasmic vesicle. It localises to the host nucleus. The protein resides in the virion. The catalysed reaction is RNA(n) + a ribonucleoside 5'-triphosphate = RNA(n+1) + diphosphate. It catalyses the reaction Hydrolyzes glutaminyl bonds, and activity is further restricted by preferences for the amino acids in P6 - P1' that vary with the species of potyvirus, e.g. Glu-Xaa-Xaa-Tyr-Xaa-Gln-|-(Ser or Gly) for the enzyme from tobacco etch virus. The natural substrate is the viral polyprotein, but other proteins and oligopeptides containing the appropriate consensus sequence are also cleaved.. It carries out the reaction Hydrolyzes a Gly-|-Gly bond at its own C-terminus, commonly in the sequence -Tyr-Xaa-Val-Gly-|-Gly, in the processing of the potyviral polyprotein.. In terms of biological role, required for aphid transmission and also has proteolytic activity. Only cleaves a Gly-Gly dipeptide at its own C-terminus. Interacts with virions and aphid stylets. Acts as a suppressor of RNA-mediated gene silencing, also known as post-transcriptional gene silencing (PTGS), a mechanism of plant viral defense that limits the accumulation of viral RNAs. May have RNA-binding activity. Its function is as follows. Has helicase activity. It may be involved in replication. Indispensable for virus replication. Functionally, mediates the cap-independent, EIF4E-dependent translation of viral genomic RNAs. Binds to the cap-binding site of host EIF4E and thus interferes with the host EIF4E-dependent mRNA export and translation. VPg-RNA directly binds EIF4E and is a template for transcription. Also forms trimeric complexes with EIF4E-EIF4G, which are templates for translation. In terms of biological role, has RNA-binding and proteolytic activities. Its function is as follows. An RNA-dependent RNA polymerase that plays an essential role in the virus replication. Involved in aphid transmission, cell-to-cell and systemis movement, encapsidation of the viral RNA and in the regulation of viral RNA amplification. In Zucchini yellow mosaic virus (strain Reunion Island) (ZYMV), this protein is Genome polyprotein.